A 248-amino-acid chain; its full sequence is Triosephosphate isomerase (248 aa).

Asparagine 10 and lysine 12 together coordinate substrate. Catalysis depends on histidine 95, which acts as the Electrophile. The active-site Proton acceptor is glutamate 165.

It belongs to the triosephosphate isomerase family. Homodimer.

The enzyme catalyses D-glyceraldehyde 3-phosphate = dihydroxyacetone phosphate. Its pathway is carbohydrate biosynthesis; gluconeogenesis. It participates in carbohydrate degradation; glycolysis; D-glyceraldehyde 3-phosphate from glycerone phosphate: step 1/1. The polypeptide is Triosephosphate isomerase (TPI1) (Zygosaccharomyces bailii).